A 677-amino-acid polypeptide reads, in one-letter code: Beta-galactosidase BgaA (677 aa).

Residue arginine 112 participates in substrate binding. Cysteine 116 contributes to the Zn(2+) binding site. A substrate-binding site is contributed by asparagine 150. Glutamate 151 functions as the Proton donor in the catalytic mechanism. Residues cysteine 156, cysteine 158, and cysteine 161 each coordinate Zn(2+). Glutamate 309 acts as the Nucleophile in catalysis. Residues tryptophan 317 and 357–360 contribute to the substrate site; that span reads EKYH.

It belongs to the glycosyl hydrolase 42 family. In terms of assembly, dimer.

The enzyme catalyses Hydrolysis of terminal non-reducing beta-D-galactose residues in beta-D-galactosides.. With respect to regulation, no activity is lost during treatment with 20 or 100 mM EDTA in Z buffer for 3 hours at 0 degrees Celsius, nor is activity greatly stimulated by the addition of cations. Inhibited by 1 mM zinc and 1 mM copper, the levels of activity decrease to 10% of the untreated control. Nickel, cobalt and manganese at concentrations of 10 mM decrease enzyme activity to either 40% (for nickel and cobalt) or 60% (for manganese) of the activity in untreated controls. No change in enzyme activity in the presence of calcium and magnesium at concentrations up to 50 mM. EDTA-treated enzyme exhibits a slight increase in relative specific activity when it is assayed in the presence of 50 mM NaCl or 50 mM KCl, it does not exhibit enhanced activity at concentrations greater than 250 mM. Maintains between 20 and 40% of activity in the presence of 4 M NaCl or 4 M KCl, and it is more active in the presence of KCl than in the presence of NaCl. Retains 50% of activity in the presence of 3 M KCl or 2.5 M NaCl. Hydrolyzes o-nitrophenyl-beta-D-galactopyranoside (ONPG), p-nitrophenyl-beta-D-galactopyranoside (PNPG), 5-bromo-4-chloro-3-indoyl-beta-D-galactosde (X-gal), o-nitrophenyl-beta-D-fucopyranoside (ONPF) and p-nitrophenyl-beta-D-fucopyranoside (PNPF) with greatest activity towards ONPG and PNPG and low levels of activity with ONPF and PNPF. Detectable, but very low levels of activity towards p-nitrophenyl-beta-lactose (PNPL), p-nitrophenyl-beta-cellobiose (PNPC), p-nitrophenyl-alpha-galactopyranoside (PNP-alpha-G), and p-nitrophenyl-beta-xylopyranoside (PNPX). The sequence is that of Beta-galactosidase BgaA from Planococcus sp. (strain 'SOS Orange').